Consider the following 336-residue polypeptide: NADH-quinone oxidoreductase subunit H (336 aa).

8 helical membrane passes run 4–24 (YILW…LVVA), 75–95 (YLFF…WAVI), 108–128 (LGLL…VIAG), 154–174 (MGFA…TGII), 181–201 (IWHW…IAGI), 233–253 (LFFL…SIMF), 272–292 (FVPG…MFLW), and 308–328 (LGWK…ACMV).

This sequence belongs to the complex I subunit 1 family. In terms of assembly, NDH-1 is composed of 14 different subunits. Subunits NuoA, H, J, K, L, M, N constitute the membrane sector of the complex.

It localises to the cell inner membrane. It carries out the reaction a quinone + NADH + 5 H(+)(in) = a quinol + NAD(+) + 4 H(+)(out). NDH-1 shuttles electrons from NADH, via FMN and iron-sulfur (Fe-S) centers, to quinones in the respiratory chain. The immediate electron acceptor for the enzyme in this species is believed to be ubiquinone. Couples the redox reaction to proton translocation (for every two electrons transferred, four hydrogen ions are translocated across the cytoplasmic membrane), and thus conserves the redox energy in a proton gradient. This subunit may bind ubiquinone. This Francisella tularensis subsp. tularensis (strain FSC 198) protein is NADH-quinone oxidoreductase subunit H.